Consider the following 272-residue polypeptide: MKMFDNIKNVGKLIRLERIFDKKSEKTVIIPMDHGVSSGPLDGLKDMRITTNAVADGGANAVLGHKGLVRHGHRGYGRDIGLIIHMSAGTSLSPDPNKKVIVTTVEDAMRLGADAVSLHVNVGAETDFEMYRDLGLISETCEQWGMPLIAMMYPRGPKIEDEKDPEVVAHAARLGAELGADIIKTNYTGDPDTFKEVVKGCPAPIVIAGGPKTNTDEEFLQMVKDAMHAGGKGVASGRNVFQHKDVKGITSAICKIVHEDVEVKEALKEIKI.

Asp-33 serves as the catalytic Proton acceptor. 1-deoxy-D-threo-hexo-2,5-diulose 6-phosphate-binding positions include 33-37 (DHGVS) and 153-155 (YPR). Tyr-153 functions as the Proton donor in the catalytic mechanism. The Schiff-base intermediate with substrate role is filled by Lys-184. 1-deoxy-D-threo-hexo-2,5-diulose 6-phosphate is bound by residues 209–210 (GG) and 237–238 (GR).

This sequence belongs to the DeoC/FbaB aldolase family. ADHS subfamily. In terms of assembly, homodecamer.

It catalyses the reaction 1-deoxy-D-threo-hexo-2,5-diulose 6-phosphate + L-aspartate 4-semialdehyde = 2,3-dioxopropyl phosphate + 2-amino-2,3,7-trideoxy-D-lyxo-hept-6-ulosonate. Its function is as follows. Catalyzes a transaldol reaction between 6-deoxy-5-ketofructose 1-phosphate (DKFP) and L-aspartate semialdehyde (ASA) with an elimination of hydroxypyruvaldehyde phosphate to yield 2-amino-3,7-dideoxy-D-threo-hept-6-ulosonate (ADH). Plays a key role in an alternative pathway of the biosynthesis of 3-dehydroquinate (DHQ), which is involved in the canonical pathway for the biosynthesis of aromatic amino acids. The chain is 2-amino-3,7-dideoxy-D-threo-hept-6-ulosonate synthase from Methanococcus maripaludis (strain C7 / ATCC BAA-1331).